The following is a 1194-amino-acid chain: Multidrug efflux ATP-binding/permease protein BCG_0231 (1194 aa).

The next 6 membrane-spanning stretches (helical) occupy residues 20 to 40 (LLLG…VPLV), 56 to 76 (LAPW…LTYV), 130 to 150 (LLFD…GVAV), 153 to 173 (WLSV…GLIA), 258 to 278 (FALG…FVAF), and 279 to 299 (WACL…LTIA). In terms of domain architecture, ABC transmembrane type-1 1 spans 21–301 (LLGFGAALAG…LAGMLTIAQQ (281 aa)). The 235-residue stretch at 334 to 568 (LEFQRVSFGY…CPRYRELLSP (235 aa)) folds into the ABC transporter 1 domain. ATP is bound at residue 367–374 (GAPGSGKS). Transmembrane regions (helical) follow at residues 628–648 (ALSL…PLLI), 660–680 (VLSA…IRWV), 743–763 (LVVA…LLAI), 765–785 (ARLV…TWQF), 847–867 (LLAL…TLVL), and 878–898 (VISV…YTPI). In terms of domain architecture, ABC transmembrane type-1 2 spans 628-910 (ALSLLLVAVQ…LAQMFDDYQR (283 aa)). Residues 942–1177 (VVFDAVHYSY…GGHYSRLWAA (236 aa)) form the ABC transporter 2 domain. Residue 976–983 (GSTGSGKS) participates in ATP binding.

It belongs to the ABC transporter superfamily. Lipid exporter (TC 3.A.1.106) family.

Its subcellular location is the cell inner membrane. Its function is as follows. Overexpression increases resistance to chloramphenicol, ampicillin, streptomycin, tetracyclin and vancomycin. The sequence is that of Multidrug efflux ATP-binding/permease protein BCG_0231 from Mycobacterium bovis (strain BCG / Pasteur 1173P2).